The sequence spans 144 residues: (R)-specific enoyl-CoA hydratase (144 aa).

In terms of domain architecture, MaoC-like spans 13 to 128 (DIKEGQSASL…TFRTTCTVAG (116 aa)).

Homotetramer.

The enzyme catalyses a (3R)-3-hydroxyacyl-CoA = a (2E)-enoyl-CoA + H2O. Its function is as follows. Catalyzes the hydration of trans-2-enoyl-CoAs with a chain-length of 4-6 carbon atoms, forming the corresponding (3R)-3-hydroxyacyl-CoAs, which can then be utilized for the production of polyhydroxyalkanoates (PHA) polymers. Cannot use trans-2,3-octenoyl-CoA as substrate. In Rhodospirillum rubrum (strain ATCC 11170 / ATH 1.1.1 / DSM 467 / LMG 4362 / NCIMB 8255 / S1), this protein is (R)-specific enoyl-CoA hydratase.